We begin with the raw amino-acid sequence, 696 residues long: Elongation factor G (696 aa).

In terms of domain architecture, tr-type G spans 8–282; that stretch reads KDYRNIGIMA…AVVDYLPSPL (275 aa). GTP contacts are provided by residues 17–24, 81–85, and 135–138; these read AHIDAGKT, DTPGH, and NKMD.

Belongs to the TRAFAC class translation factor GTPase superfamily. Classic translation factor GTPase family. EF-G/EF-2 subfamily.

The protein resides in the cytoplasm. Catalyzes the GTP-dependent ribosomal translocation step during translation elongation. During this step, the ribosome changes from the pre-translocational (PRE) to the post-translocational (POST) state as the newly formed A-site-bound peptidyl-tRNA and P-site-bound deacylated tRNA move to the P and E sites, respectively. Catalyzes the coordinated movement of the two tRNA molecules, the mRNA and conformational changes in the ribosome. This is Elongation factor G from Mycoplasmopsis synoviae (strain 53) (Mycoplasma synoviae).